The primary structure comprises 362 residues: [LysW]-lysine hydrolase (362 aa).

Histidine 69 is a binding site for Zn(2+). Residue aspartate 71 is part of the active site. Aspartate 94 contributes to the Zn(2+) binding site. The active-site Proton acceptor is glutamate 127. Zn(2+) contacts are provided by glutamate 128, glutamate 151, and histidine 334.

This sequence belongs to the peptidase M20A family. LysK subfamily. Zn(2+) serves as cofactor. It depends on Co(2+) as a cofactor.

It is found in the cytoplasm. The enzyme catalyses [amino-group carrier protein]-C-terminal-gamma-(L-lysyl)-L-glutamate + H2O = [amino-group carrier protein]-C-terminal-L-glutamate + L-lysine. It functions in the pathway amino-acid biosynthesis; L-lysine biosynthesis via AAA pathway; L-lysine from L-alpha-aminoadipate (Thermus route): step 5/5. Functionally, catalyzes the release of L-lysine from [LysW]-gamma-L-lysine. The polypeptide is [LysW]-lysine hydrolase (Deinococcus radiodurans (strain ATCC 13939 / DSM 20539 / JCM 16871 / CCUG 27074 / LMG 4051 / NBRC 15346 / NCIMB 9279 / VKM B-1422 / R1)).